A 400-amino-acid chain; its full sequence is Argininosuccinate synthase (400 aa).

9–17 lines the ATP pocket; it reads AYSGGLDTS. Tyrosine 87 contacts L-citrulline. An ATP-binding site is contributed by glycine 117. Residues threonine 119, asparagine 123, and aspartate 124 each contribute to the L-aspartate site. L-citrulline is bound at residue asparagine 123. L-citrulline is bound by residues arginine 127, serine 176, serine 185, glutamate 261, and tyrosine 273.

This sequence belongs to the argininosuccinate synthase family. Type 1 subfamily. In terms of assembly, homotetramer.

It localises to the cytoplasm. The catalysed reaction is L-citrulline + L-aspartate + ATP = 2-(N(omega)-L-arginino)succinate + AMP + diphosphate + H(+). The protein operates within amino-acid biosynthesis; L-arginine biosynthesis; L-arginine from L-ornithine and carbamoyl phosphate: step 2/3. The protein is Argininosuccinate synthase of Chlorobium limicola (strain DSM 245 / NBRC 103803 / 6330).